Here is a 254-residue protein sequence, read N- to C-terminus: Probable triosephosphate isomerase 2 (254 aa).

Residue 9 to 11 (NMK) participates in substrate binding. The Electrophile role is filled by histidine 96. Glutamate 168 serves as the catalytic Proton acceptor. Glycine 174 and serine 212 together coordinate substrate.

It belongs to the triosephosphate isomerase family. Homodimer.

Its subcellular location is the cytoplasm. It catalyses the reaction D-glyceraldehyde 3-phosphate = dihydroxyacetone phosphate. Its pathway is carbohydrate biosynthesis; gluconeogenesis. It participates in carbohydrate degradation; glycolysis; D-glyceraldehyde 3-phosphate from glycerone phosphate: step 1/1. Functionally, involved in the gluconeogenesis. Catalyzes stereospecifically the conversion of dihydroxyacetone phosphate (DHAP) to D-glyceraldehyde-3-phosphate (G3P). The sequence is that of Probable triosephosphate isomerase 2 from Listeria monocytogenes serovar 1/2a (strain ATCC BAA-679 / EGD-e).